A 77-amino-acid chain; its full sequence is TFAGLVLLFVVCYASESEEKEFPKEMLSSIFAVDNDFKQEERDCAGYMRECKEKLCCSGYVRSSRWKWCVLPAPWRR.

Residues 1 to 14 (TFAGLVLLFVVCYA) form the signal peptide. Positions 15–42 (SESEEKEFPKEMLSSIFAVDNDFKQEER) are excised as a propeptide. 2 disulfide bridges follow: cysteine 44/cysteine 57 and cysteine 56/cysteine 69.

The protein belongs to the neurotoxin 10 (Hwtx-1) family. 51 (Hntx-8) subfamily. Hntx-8 sub-subfamily. As to expression, expressed by the venom gland.

It is found in the secreted. Ion channel inhibitor. In Cyriopagopus hainanus (Chinese bird spider), this protein is U3-theraphotoxin-Hhn1k.